An 855-amino-acid chain; its full sequence is Putative AAA family ATPase R476 (855 aa).

Residues 1–13 show a composition bias toward basic and acidic residues; that stretch reads MNKRDFSELKNSE. The interval 1–37 is disordered; sequence MNKRDFSELKNSESSEESSLVSSTETVRSSKRNKKFH. The span at 17 to 27 shows a compositional bias: low complexity; that stretch reads ESSLVSSTETV. 610-617 contacts ATP; the sequence is GPPGTGKT.

It belongs to the AAA ATPase family.

In Acanthamoeba polyphaga mimivirus (APMV), this protein is Putative AAA family ATPase R476.